The sequence spans 175 residues: Lactobacillus up-regulated protein (175 aa).

A signal peptide spans 1–18; the sequence is MRSIFLAVLGLMATSSLA. The N-linked (GlcNAc...) asparagine glycan is linked to asparagine 59.

The polypeptide is Lactobacillus up-regulated protein (lbuA) (Emericella nidulans (strain FGSC A4 / ATCC 38163 / CBS 112.46 / NRRL 194 / M139) (Aspergillus nidulans)).